A 363-amino-acid chain; its full sequence is Ferrochelatase (363 aa).

Fe cation contacts are provided by His209 and Glu290.

It belongs to the ferrochelatase family.

It localises to the cytoplasm. It carries out the reaction heme b + 2 H(+) = protoporphyrin IX + Fe(2+). The protein operates within porphyrin-containing compound metabolism; protoheme biosynthesis; protoheme from protoporphyrin-IX: step 1/1. Catalyzes the ferrous insertion into protoporphyrin IX. This chain is Ferrochelatase, found in Methylibium petroleiphilum (strain ATCC BAA-1232 / LMG 22953 / PM1).